The primary structure comprises 558 residues: Ceramide kinase-like protein (558 aa).

Residues 1–36 (MPWRRRRNRVSALEGGREEEAPPEAAAVPPALLTSP) form a disordered region. 2 short sequence motifs (nuclear localization signal) span residues 2–9 (PWRRRRNR) and 102–106 (KLKRR). Residues 164–339 (NRPKSLKILL…VDVCTFSTAG (176 aa)) enclose the DAGKc domain.

Phosphorylated on serine residues. As to expression, isoform 1 and isoform 2 are expressed in adult retina, liver and pancreas as well as in fetal brain, lung and kidney. Isoform 3 is expressed in adult retina as well as in fetal lung and liver. Isoform 4 is expressed in adult retina, lung and kidney as well as in fetal lung and liver. Moderately expressed in retina, kidney, lung, testis, trachea, and pancreas. Weakly expressed in brain, placenta and liver.

It localises to the cytoplasm. It is found in the nucleus. Its subcellular location is the nucleolus. The protein resides in the golgi apparatus. The protein localises to the trans-Golgi network. It localises to the endoplasmic reticulum. Has no detectable ceramide-kinase activity. Overexpression of CERKL protects cells from apoptosis in oxidative stress conditions. The protein is Ceramide kinase-like protein (CERKL) of Homo sapiens (Human).